The following is a 318-amino-acid chain: Glutathione synthetase (318 aa).

Positions 129 to 314 (KLAITEFPDL…VPEMFAVALE (186 aa)) constitute an ATP-grasp domain. Position 155–211 (155–211 (HAAQGDVIVKPLDDMGGTGIFRLQRSEPNLNAILETLTDNGTRTIMAQRYIPEIVKG)) interacts with ATP. The Mg(2+) site is built by glutamate 285 and asparagine 287.

The protein belongs to the prokaryotic GSH synthase family. Requires Mg(2+) as cofactor. It depends on Mn(2+) as a cofactor.

It catalyses the reaction gamma-L-glutamyl-L-cysteine + glycine + ATP = glutathione + ADP + phosphate + H(+). The protein operates within sulfur metabolism; glutathione biosynthesis; glutathione from L-cysteine and L-glutamate: step 2/2. This chain is Glutathione synthetase, found in Bordetella pertussis (strain Tohama I / ATCC BAA-589 / NCTC 13251).